A 165-amino-acid chain; its full sequence is Transcription factor E (165 aa).

The 83-residue stretch at 5–87 (NDPVVRGYLL…LWQLDLSDIE (83 aa)) folds into the HTH TFE/IIEalpha-type domain.

The protein belongs to the TFE family. As to quaternary structure, monomer. Interaction with RNA polymerase subunits RpoF and RpoE is necessary for Tfe stimulatory transcription activity. Able to interact with Tbp and RNA polymerase in the absence of DNA promoter. Interacts both with the preinitiation and elongation complexes.

In terms of biological role, transcription factor that plays a role in the activation of archaeal genes transcribed by RNA polymerase. Facilitates transcription initiation by enhancing TATA-box recognition by TATA-box-binding protein (Tbp), and transcription factor B (Tfb) and RNA polymerase recruitment. Not absolutely required for transcription in vitro, but particularly important in cases where Tbp or Tfb function is not optimal. It dynamically alters the nucleic acid-binding properties of RNA polymerases by stabilizing the initiation complex and destabilizing elongation complexes. Seems to translocate with the RNA polymerase following initiation and acts by binding to the non template strand of the transcription bubble in elongation complexes. In Methanococcoides burtonii (strain DSM 6242 / NBRC 107633 / OCM 468 / ACE-M), this protein is Transcription factor E.